Reading from the N-terminus, the 473-residue chain is Glutamate--tRNA ligase 2 (473 aa).

The short motif at 11-21 (PSPTGYLHIGG) is the 'HIGH' region element. The span at 113–133 (KARAEGRPPRYDGRWRDRDPS) shows a compositional bias: basic and acidic residues. Residues 113–136 (KARAEGRPPRYDGRWRDRDPSEAP) are disordered. Residues 240–244 (KLSKR) carry the 'KMSKS' region motif. An ATP-binding site is contributed by lysine 243.

The protein belongs to the class-I aminoacyl-tRNA synthetase family. Glutamate--tRNA ligase type 1 subfamily. As to quaternary structure, monomer.

It is found in the cytoplasm. The enzyme catalyses tRNA(Glu) + L-glutamate + ATP = L-glutamyl-tRNA(Glu) + AMP + diphosphate. Catalyzes the attachment of glutamate to tRNA(Glu) in a two-step reaction: glutamate is first activated by ATP to form Glu-AMP and then transferred to the acceptor end of tRNA(Glu). The polypeptide is Glutamate--tRNA ligase 2 (Brucella canis (strain ATCC 23365 / NCTC 10854 / RM-666)).